We begin with the raw amino-acid sequence, 293 residues long: 4-hydroxy-tetrahydrodipicolinate synthase (293 aa).

A pyruvate-binding site is contributed by Thr-45. Tyr-133 functions as the Proton donor/acceptor in the catalytic mechanism. Lys-161 functions as the Schiff-base intermediate with substrate in the catalytic mechanism. Ile-203 provides a ligand contact to pyruvate.

The protein belongs to the DapA family. As to quaternary structure, homotetramer; dimer of dimers.

The protein localises to the cytoplasm. The catalysed reaction is L-aspartate 4-semialdehyde + pyruvate = (2S,4S)-4-hydroxy-2,3,4,5-tetrahydrodipicolinate + H2O + H(+). It participates in amino-acid biosynthesis; L-lysine biosynthesis via DAP pathway; (S)-tetrahydrodipicolinate from L-aspartate: step 3/4. Functionally, catalyzes the condensation of (S)-aspartate-beta-semialdehyde [(S)-ASA] and pyruvate to 4-hydroxy-tetrahydrodipicolinate (HTPA). In Shewanella piezotolerans (strain WP3 / JCM 13877), this protein is 4-hydroxy-tetrahydrodipicolinate synthase.